The chain runs to 644 residues: Cyclin-dependent kinase C-2 C (644 aa).

Residues 105–389 (FQKLEKIGQG…ASSALNSEYF (285 aa)) enclose the Protein kinase domain. ATP is bound by residues 111–119 (IGQGTYSSV) and Lys134. Residue Tyr116 is modified to Phosphotyrosine. Asp229 serves as the catalytic Proton acceptor. Thr263 carries the post-translational modification Phosphothreonine. A Nuclear localization signal motif is present at residues 420 to 427 (RKRANLKL). Residues 565-576 (SKLSRIGERHGS) are compositionally biased toward basic and acidic residues. A disordered region spans residues 565 to 591 (SKLSRIGERHGSLDGSGLDFSQREEDS).

It belongs to the protein kinase superfamily. CMGC Ser/Thr protein kinase family. CDC2/CDKX subfamily. Autophosphorylated. In terms of tissue distribution, expressed specifically in flowers and pollen.

The protein resides in the nucleus. The protein is Cyclin-dependent kinase C-2 C of Arabidopsis thaliana (Mouse-ear cress).